The primary structure comprises 302 residues: S-adenosylmethionine sensor upstream of mTORC1 (302 aa).

S-adenosyl-L-homocysteine contacts are provided by arginine 73, glycine 132, and aspartate 150. S-adenosyl-L-methionine contacts are provided by arginine 73, glycine 132, aspartate 150, leucine 151, aspartate 162, phenylalanine 163, and serine 196. Aspartate 162, phenylalanine 163, and serine 196 together coordinate S-adenosyl-L-homocysteine.

The protein belongs to the BMT2/SAMTOR family.

In terms of biological role, S-adenosyl-L-methionine-binding protein. It is unclear whether this protein acts as a sensor of S-adenosyl-L-methionine to signal methionine sufficiency to mTORC1. Probably acts as a S-adenosyl-L-methionine-dependent methyltransferase. This chain is S-adenosylmethionine sensor upstream of mTORC1, found in Drosophila melanogaster (Fruit fly).